We begin with the raw amino-acid sequence, 370 residues long: 4-hydroxy-3-methylbut-2-en-1-yl diphosphate synthase (flavodoxin) (370 aa).

Residues cysteine 270, cysteine 273, cysteine 305, and glutamate 312 each coordinate [4Fe-4S] cluster.

This sequence belongs to the IspG family. The cofactor is [4Fe-4S] cluster.

The catalysed reaction is (2E)-4-hydroxy-3-methylbut-2-enyl diphosphate + oxidized [flavodoxin] + H2O + 2 H(+) = 2-C-methyl-D-erythritol 2,4-cyclic diphosphate + reduced [flavodoxin]. The protein operates within isoprenoid biosynthesis; isopentenyl diphosphate biosynthesis via DXP pathway; isopentenyl diphosphate from 1-deoxy-D-xylulose 5-phosphate: step 5/6. Converts 2C-methyl-D-erythritol 2,4-cyclodiphosphate (ME-2,4cPP) into 1-hydroxy-2-methyl-2-(E)-butenyl 4-diphosphate. This Azotobacter vinelandii (strain DJ / ATCC BAA-1303) protein is 4-hydroxy-3-methylbut-2-en-1-yl diphosphate synthase (flavodoxin).